Consider the following 112-residue polypeptide: Large ribosomal subunit protein eL30x (112 aa).

This sequence belongs to the eukaryotic ribosomal protein eL30 family.

The protein is Large ribosomal subunit protein eL30x (RPL30C) of Arabidopsis thaliana (Mouse-ear cress).